Here is a 380-residue protein sequence, read N- to C-terminus: Lipoyl synthase, mitochondrial (380 aa).

Residues C104, C109, C115, C135, C139, C142, and S350 each coordinate [4Fe-4S] cluster. A Radical SAM core domain is found at 120–339 (EHGTQTATIM…ETRGNELGFL (220 aa)).

The protein belongs to the radical SAM superfamily. Lipoyl synthase family. The cofactor is [4Fe-4S] cluster.

Its subcellular location is the mitochondrion. The enzyme catalyses [[Fe-S] cluster scaffold protein carrying a second [4Fe-4S](2+) cluster] + N(6)-octanoyl-L-lysyl-[protein] + 2 oxidized [2Fe-2S]-[ferredoxin] + 2 S-adenosyl-L-methionine + 4 H(+) = [[Fe-S] cluster scaffold protein] + N(6)-[(R)-dihydrolipoyl]-L-lysyl-[protein] + 4 Fe(3+) + 2 hydrogen sulfide + 2 5'-deoxyadenosine + 2 L-methionine + 2 reduced [2Fe-2S]-[ferredoxin]. It participates in protein modification; protein lipoylation via endogenous pathway; protein N(6)-(lipoyl)lysine from octanoyl-[acyl-carrier-protein]: step 2/2. In terms of biological role, catalyzes the radical-mediated insertion of two sulfur atoms into the C-6 and C-8 positions of the octanoyl moiety bound to the lipoyl domains of lipoate-dependent enzymes, thereby converting the octanoylated domains into lipoylated derivatives. The sequence is that of Lipoyl synthase, mitochondrial from Culex quinquefasciatus (Southern house mosquito).